The primary structure comprises 1081 residues: Probable sucrose-phosphate synthase 2 (1081 aa).

Disordered stretches follow at residues 116-152 (EQGRKDVTEDMSEDLSEGEKGDVMGETPVALDSPRGN), 239-267 (EPTEMLSSSSTTAGEAHEPEEEEEEEDLG), and 760-780 (IKRQDSGPAQREAEGKAGDVP). A compositionally biased stretch (acidic residues) spans 256–267 (EPEEEEEEEDLG).

This sequence belongs to the glycosyltransferase 1 family. Homodimer or homotetramer.

The enzyme catalyses beta-D-fructose 6-phosphate + UDP-alpha-D-glucose = sucrose 6(F)-phosphate + UDP + H(+). It participates in glycan biosynthesis; sucrose biosynthesis; sucrose from D-fructose 6-phosphate and UDP-alpha-D-glucose: step 1/2. Its activity is regulated as follows. Activity is regulated by phosphorylation and moderated by concentration of metabolites and light. Functionally, plays a role in photosynthetic sucrose synthesis by catalyzing the rate-limiting step of sucrose biosynthesis from UDP-glucose and fructose- 6-phosphate. Involved in the regulation of carbon partitioning in the leaves of plants. May regulate the synthesis of sucrose and therefore play a major role as a limiting factor in the export of photoassimilates out of the leaf. Plays a role for sucrose availability that is essential for plant growth and fiber elongation. In Craterostigma plantagineum (Blue gem), this protein is Probable sucrose-phosphate synthase 2 (SPS2).